Reading from the N-terminus, the 212-residue chain is Ribosomal RNA small subunit methyltransferase G (212 aa).

S-adenosyl-L-methionine-binding positions include Gly73, 127–128 (IE), and Arg143.

Belongs to the methyltransferase superfamily. RNA methyltransferase RsmG family.

It localises to the cytoplasm. The enzyme catalyses guanosine(527) in 16S rRNA + S-adenosyl-L-methionine = N(7)-methylguanosine(527) in 16S rRNA + S-adenosyl-L-homocysteine. In terms of biological role, specifically methylates the N7 position of guanine in position 527 of 16S rRNA. In Methylobacterium sp. (strain 4-46), this protein is Ribosomal RNA small subunit methyltransferase G.